The sequence spans 551 residues: Cytochrome P450 monooxygenase abl5 (551 aa).

Asparagine 24 is a glycosylation site (N-linked (GlcNAc...) asparagine). The chain crosses the membrane as a helical span at residues 37–57 (VVLNTLTAIVVVWICYRAVIY). N-linked (GlcNAc...) asparagine glycosylation is found at asparagine 174, asparagine 218, asparagine 283, asparagine 307, and asparagine 441. A heme-binding site is contributed by cysteine 495.

Belongs to the cytochrome P450 family. It depends on heme as a cofactor.

The protein resides in the membrane. Functionally, cytochrome P450 monooxygenase; part of the gene cluster that mediates the biosynthesis of abscisic acid (ABA), a phytohormone that acts antagonistically toward salicylic acid (SA), jasmonic acid (JA) and ethylene (ETH) signaling, to impede plant defense responses. The first step of the pathway catalyzes the reaction from farnesyl diphosphate to alpha-ionylideneethane performed by the alpha-ionylideneethane synthase abl3 via a three-step reaction mechanism involving 2 neutral intermediates, beta-farnesene and allofarnesene. The cytochrome P450 monooxygenase abl1 might then be involved in the conversion of alpha-ionylideneethane to alpha-ionylideneacetic acid. Alpha-ionylideneacetic acid is further converted to abscisic acid in 2 steps involving the cytochrome P450 monooxygenase abl2 and the short-chain dehydrogenase/reductase abl4, via the intermediates 1'-deoxy-ABA or 1',4'-trans-diol-ABA, depending on the order of action of these 2 enzymes. Abl2 is responsible for the hydroxylation of carbon atom C-1' and abl4 might be involved in the oxidation of the C-4' carbon atom. The cytochrome monooxygenase abl5 seems not essential for the biosynthesis of ABA and its function remains to be identified. This is Cytochrome P450 monooxygenase abl5 from Leptosphaeria maculans (strain JN3 / isolate v23.1.3 / race Av1-4-5-6-7-8) (Blackleg fungus).